The primary structure comprises 239 residues: mRNA turnover protein 4 homolog (239 aa).

The segment at 215-239 (FQQMGDDLPESASESTEESDSEDDD) is disordered. A phosphoserine mark is found at serine 225, serine 229, and serine 233. A compositionally biased stretch (acidic residues) spans 229–239 (STEESDSEDDD).

The protein belongs to the universal ribosomal protein uL10 family. Associates with the pre-60S ribosomal particle. Interacts with MINAS-60 (product of an alternative open reading frame of RBM10).

Its subcellular location is the nucleus. The protein resides in the nucleolus. The protein localises to the cytoplasm. Its function is as follows. Component of the ribosome assembly machinery. Nuclear paralog of the ribosomal protein P0, it binds pre-60S subunits at an early stage of assembly in the nucleolus, and is replaced by P0 in cytoplasmic pre-60S subunits and mature 80S ribosomes. The chain is mRNA turnover protein 4 homolog (MRTO4) from Homo sapiens (Human).